The following is a 593-amino-acid chain: Multidrug resistance-like ATP-binding protein MdlB (593 aa).

Topologically, residues 1–25 are cytoplasmic; sequence MRSFSQLWPTLKRLLAYGSPWRKPL. The ABC transmembrane type-1 domain occupies 25–310; the sequence is LGIAVLMMWV…LTTQQAMLQQ (286 aa). The chain crosses the membrane as a helical span at residues 26-46; it reads GIAVLMMWVAAAAEVSGPLLI. Over 47–62 the chain is Periplasmic; sequence SYFIDNMVAKNNLPLK. Residues 63–83 form a helical membrane-spanning segment; it reads VVAGLAAAYVGLQLFAAGLHY. Over 84–140 the chain is Cytoplasmic; that stretch reads AQSLLFNRAAVGVVQQLRTDVMDAALRQPLSEFDTQPVGQVISRVTNDTEVIRDLYV. A helical transmembrane segment spans residues 141–161; it reads TVVATVLRSAALVGAMLVAMF. The Periplasmic segment spans residues 162 to 164; it reads SLD. Residues 165-185 form a helical membrane-spanning segment; the sequence is WRMALVAIMIFPVVLVVMVIY. Over 186 to 254 the chain is Cytoplasmic; sequence QRYSTPIVRR…LRLDGFLLRP (69 aa). A helical membrane pass occupies residues 255–275; it reads LLSLFSSLILCGLLMLFGFSA. Topologically, residues 276–278 are periplasmic; that stretch reads SGT. A helical transmembrane segment spans residues 279-299; that stretch reads IEVGVLYAFISYLGRLNEPLI. Residues 300 to 593 are Cytoplasmic-facing; sequence ELTTQQAMLQ…SVREEESLSA (294 aa). The ABC transporter domain maps to 341 to 574; it reads IEVDNVSFAY…QGRYWQMYQL (234 aa). 374-381 lines the ATP pocket; it reads GHTGSGKS.

Belongs to the ABC transporter superfamily. Drug exporter-2 (TC 3.A.1.117) family.

The protein localises to the cell inner membrane. The catalysed reaction is ATP + H2O + xenobioticSide 1 = ADP + phosphate + xenobioticSide 2.. The protein is Multidrug resistance-like ATP-binding protein MdlB (mdlB) of Escherichia coli O6:H1 (strain CFT073 / ATCC 700928 / UPEC).